The primary structure comprises 200 residues: Histone H1 (200 aa).

The segment covering 1–14 (MPPKKAPTTAKKAA) has biased composition (low complexity). Disordered stretches follow at residues 1–20 (MPPK…PTHT) and 78–200 (DFIQ…NKKA). The 76-residue stretch at 18-93 (THTSYRDMIK…GTSGPVKLAK (76 aa)) folds into the H15 domain. Low complexity predominate over residues 94–116 (KQAPAKPAPKKPATTTKTAAPKK). Over residues 120–131 (KKADKAEKAEKP) the composition is skewed to basic and acidic residues. Residues 159 to 185 (TAAPAVVDKPKVVSVTKSGRKTTTTAK) are compositionally biased toward low complexity.

The protein belongs to the histone H1/H5 family.

The protein localises to the nucleus. It localises to the chromosome. Could act as an H1-type linker histone. This is Histone H1 (hhoA) from Emericella nidulans (strain FGSC A4 / ATCC 38163 / CBS 112.46 / NRRL 194 / M139) (Aspergillus nidulans).